We begin with the raw amino-acid sequence, 136 residues long: Protein NrdI (136 aa).

It belongs to the NrdI family.

Functionally, probably involved in ribonucleotide reductase function. The protein is Protein NrdI of Enterobacter sp. (strain 638).